Reading from the N-terminus, the 320-residue chain is 1,5-anhydro-D-fructose reductase (320 aa).

Asp-35 is a binding site for NADP(+). Catalysis depends on Tyr-40, which acts as the Proton donor. His-102 lines the substrate pocket. NADP(+) is bound by residues Gln-194 and 265–277; that span reads IPGS…IKEN.

The protein belongs to the aldo/keto reductase family. As to quaternary structure, monomer. Specifically expressed in testis. Expressed in testicular germ cells and testis interstitial cells.

It is found in the cytoplasm. The enzyme catalyses 1,5-anhydro-D-glucitol + NADP(+) = 1,5-anhydro-D-fructose + NADPH + H(+). Inhibited by p-chloromercuribenzoic acid and alkyliodines. Its function is as follows. Catalyzes the NADPH-dependent reduction of 1,5-anhydro-D-fructose (AF) to 1,5-anhydro-D-glucitol. Has low NADPH-dependent reductase activity towards 9,10-phenanthrenequinone (in vitro). The chain is 1,5-anhydro-D-fructose reductase (AKR1E2) from Homo sapiens (Human).